The chain runs to 389 residues: Major outer membrane porin (389 aa).

The N-terminal stretch at 1–23 (MKKLLKSALLSAAFAGSVGSLQA) is a signal peptide.

Belongs to the chlamydial porin (CP) (TC 1.B.2) family. In terms of assembly, part of a disulfide cross-linked outer membrane complex (COMC) composed of the major outer membrane porin (MOMP), the small cysteine-rich protein (OmcA) and the large cysteine-rich periplasmic protein (OmcB).

It localises to the cell outer membrane. In elementary bodies (EBs, the infectious stage, which is able to survive outside the host cell) provides the structural integrity of the outer envelope through disulfide cross-links with the small cysteine-rich protein and the large cysteine-rich periplasmic protein. It has been described in publications as the Sarkosyl-insoluble COMC (Chlamydia outer membrane complex), and serves as the functional equivalent of peptidoglycan. In terms of biological role, permits diffusion of specific solutes through the outer membrane. The protein is Major outer membrane porin (ompA) of Chlamydia pneumoniae (Chlamydophila pneumoniae).